The sequence spans 764 residues: Nucleolar transcription factor 1 (764 aa).

M1 is modified (N-acetylmethionine). The disordered stretch occupies residues 1–21 (MNGEADCPTDLEMAAPKGQDR). DNA-binding regions (HMG box) lie at residues 112–180 (PKKP…ARFR) and 196–264 (PEKP…RDYI). The residue at position 201 (T201) is a Phosphothreonine. A phosphoserine mark is found at S273, S336, and S364. The segment at residues 298 to 362 (TKPPPNSYSL…DYEVELLRFL (65 aa)) is a DNA-binding region (HMG box 3). The segment covering 370-379 (QQRVLGEEKM) has biased composition (basic and acidic residues). The tract at residues 370–411 (QQRVLGEEKMLNINKKQTTSPASKKPSQEGGKGGSEKPKRPV) is disordered. S389, S412, S433, S435, S484, S495, S546, S584, and S638 each carry phosphoserine. DNA-binding regions (HMG box) lie at residues 407–475 (PKRP…GGER), 482–549 (PESP…SEMR), and 568–634 (KKPP…DLWV). Residues 456-488 (YKAREAALKAQSERKPGGEREDRGKLPESPKRA) form a disordered region. Positions 457–488 (KAREAALKAQSERKPGGEREDRGKLPESPKRA) are enriched in basic and acidic residues. Residues 546–576 (SEMRAPPAATNSSKKMKFQGEPKKPPMNGYQ) are disordered. Positions 648 to 764 (YISNKRKNMT…SGDSSDSDSN (117 aa)) are disordered. A compositionally biased stretch (polar residues) spans 664–674 (PKSSRTTLQSK). A compositionally biased stretch (acidic residues) spans 677–745 (SEEDDDEEDD…DDDEDEDNES (69 aa)). The segment covering 746–758 (EGSSSSSSSSGDS) has biased composition (low complexity).

In terms of assembly, homodimer. Part of Pol I pre-initiation complex (PIC), in which Pol I core assembles with RRN3 and promoter-bound UTBF and SL1/TIF-IB complex. Interacts with TOP2A in the context of Pol I complex. Interacts with TBP. Interacts with TAF1A. Interacts with PHF6. Interacts with CEBPA (isoform 1 and isoform 4). Interacts with DDX11. Interacts with NOP53. Interacts with RASL11A. Interacts with DHX33. Binds to IRS1 and PIK3CA. Interacts with ALKBH2. Post-translationally, phosphorylated and activated by PIK3CA.

The protein localises to the nucleus. It is found in the nucleolus. Its function is as follows. Recognizes the ribosomal RNA gene promoter and activates transcription mediated by RNA polymerase I through cooperative interactions with the transcription factor SL1/TIF-IB complex. It binds specifically to the upstream control element. This chain is Nucleolar transcription factor 1 (Ubtf), found in Rattus norvegicus (Rat).